We begin with the raw amino-acid sequence, 215 residues long: UPF0502 protein YceH (215 aa).

Lys-80 carries the post-translational modification N6-acetyllysine.

It belongs to the UPF0502 family.

The sequence is that of UPF0502 protein YceH from Escherichia coli O127:H6 (strain E2348/69 / EPEC).